Consider the following 89-residue polypeptide: Small ribosomal subunit protein uS15 (89 aa).

It belongs to the universal ribosomal protein uS15 family. As to quaternary structure, part of the 30S ribosomal subunit. Forms a bridge to the 50S subunit in the 70S ribosome, contacting the 23S rRNA.

In terms of biological role, one of the primary rRNA binding proteins, it binds directly to 16S rRNA where it helps nucleate assembly of the platform of the 30S subunit by binding and bridging several RNA helices of the 16S rRNA. Its function is as follows. Forms an intersubunit bridge (bridge B4) with the 23S rRNA of the 50S subunit in the ribosome. This Streptococcus gordonii (strain Challis / ATCC 35105 / BCRC 15272 / CH1 / DL1 / V288) protein is Small ribosomal subunit protein uS15.